The primary structure comprises 203 residues: ATP-dependent Clp protease proteolytic subunit (203 aa).

Ser-100 functions as the Nucleophile in the catalytic mechanism. The active site involves His-125.

The protein belongs to the peptidase S14 family. Fourteen ClpP subunits assemble into 2 heptameric rings which stack back to back to give a disk-like structure with a central cavity, resembling the structure of eukaryotic proteasomes.

Its subcellular location is the cytoplasm. The catalysed reaction is Hydrolysis of proteins to small peptides in the presence of ATP and magnesium. alpha-casein is the usual test substrate. In the absence of ATP, only oligopeptides shorter than five residues are hydrolyzed (such as succinyl-Leu-Tyr-|-NHMec, and Leu-Tyr-Leu-|-Tyr-Trp, in which cleavage of the -Tyr-|-Leu- and -Tyr-|-Trp bonds also occurs).. Its function is as follows. Cleaves peptides in various proteins in a process that requires ATP hydrolysis. Has a chymotrypsin-like activity. Plays a major role in the degradation of misfolded proteins. The sequence is that of ATP-dependent Clp protease proteolytic subunit from Anaeromyxobacter dehalogenans (strain 2CP-1 / ATCC BAA-258).